We begin with the raw amino-acid sequence, 387 residues long: Succinate--CoA ligase [ADP-forming] subunit beta (387 aa).

ATP-binding positions include Lys-46, 53-55 (GRG), Glu-99, Ala-102, and Glu-107. The Mg(2+) site is built by Asn-199 and Asp-213. Residues Asn-264 and 321–323 (GIV) each bind substrate.

This sequence belongs to the succinate/malate CoA ligase beta subunit family. As to quaternary structure, heterotetramer of two alpha and two beta subunits. Mg(2+) is required as a cofactor.

It carries out the reaction succinate + ATP + CoA = succinyl-CoA + ADP + phosphate. It catalyses the reaction GTP + succinate + CoA = succinyl-CoA + GDP + phosphate. It participates in carbohydrate metabolism; tricarboxylic acid cycle; succinate from succinyl-CoA (ligase route): step 1/1. In terms of biological role, succinyl-CoA synthetase functions in the citric acid cycle (TCA), coupling the hydrolysis of succinyl-CoA to the synthesis of either ATP or GTP and thus represents the only step of substrate-level phosphorylation in the TCA. The beta subunit provides nucleotide specificity of the enzyme and binds the substrate succinate, while the binding sites for coenzyme A and phosphate are found in the alpha subunit. This is Succinate--CoA ligase [ADP-forming] subunit beta from Campylobacter jejuni subsp. doylei (strain ATCC BAA-1458 / RM4099 / 269.97).